A 401-amino-acid polypeptide reads, in one-letter code: Mitochondrial distribution and morphology protein 12 (401 aa).

In terms of domain architecture, SMP-LTD spans 1-401 (MSIDINWDTL…VYPSFWTFLV (401 aa)). Over residues 70-88 (YEEDEDYPDNEDDDDDEAG) the composition is skewed to acidic residues. Disordered regions lie at residues 70–95 (YEEDEDYPDNEDDDDDEAGLDSNPRN) and 190–247 (SLTL…EKSP). Residues 195–205 (PQSHPDPSSRP) are compositionally biased toward low complexity. Basic and acidic residues predominate over residues 209-220 (HQHDDERRRSLA).

Belongs to the MDM12 family. Component of the ER-mitochondria encounter structure (ERMES) or MDM complex, composed of MMM1, MDM10, MDM12 and MDM34. An MMM1 homodimer associates with one molecule of MDM12 on each side in a pairwise head-to-tail manner, and the SMP-LTD domains of MMM1 and MDM12 generate a continuous hydrophobic tunnel for phospholipid trafficking.

It localises to the mitochondrion outer membrane. Its subcellular location is the endoplasmic reticulum membrane. In terms of biological role, component of the ERMES/MDM complex, which serves as a molecular tether to connect the endoplasmic reticulum (ER) and mitochondria. Components of this complex are involved in the control of mitochondrial shape and protein biogenesis, and function in nonvesicular lipid trafficking between the ER and mitochondria. MDM12 is required for the interaction of the ER-resident membrane protein MMM1 and the outer mitochondrial membrane-resident beta-barrel protein MDM10. The MDM12-MMM1 subcomplex functions in the major beta-barrel assembly pathway that is responsible for biogenesis of all mitochondrial outer membrane beta-barrel proteins, and acts in a late step after the SAM complex. The MDM10-MDM12-MMM1 subcomplex further acts in the TOM40-specific pathway after the action of the MDM12-MMM1 complex. Essential for establishing and maintaining the structure of mitochondria and maintenance of mtDNA nucleoids. The chain is Mitochondrial distribution and morphology protein 12 from Phaeosphaeria nodorum (strain SN15 / ATCC MYA-4574 / FGSC 10173) (Glume blotch fungus).